A 93-amino-acid chain; its full sequence is Bombyxin B-11 (93 aa).

An N-terminal signal peptide occupies residues 1 to 22 (MMKTAVMFILVVVISLTYSSEE). Disulfide bonds link Cys-30–Cys-75, Cys-42–Cys-92, and Cys-74–Cys-79. The propeptide at 49-64 (GGAQYAPYWQETYLRS) is bombyxin B-11 C peptide.

Belongs to the insulin family. As to quaternary structure, heterodimer of a B chain and an A chain linked by two disulfide bonds.

The protein resides in the secreted. Functionally, brain peptide responsible for activation of prothoracic glands to produce ecdysone in insects. The chain is Bombyxin B-11 (BBXB11) from Bombyx mori (Silk moth).